Here is a 776-residue protein sequence, read N- to C-terminus: Structure-specific endonuclease subunit SLX4 (776 aa).

A compositionally biased stretch (acidic residues) spans 201–217; that stretch reads EEQMVSDDNSSTEDDTD. Disordered stretches follow at residues 201 to 223, 263 to 283, and 507 to 531; these read EEQMVSDDNSSTEDDTDPTQNDG, KSLQRHSQKDSDNGNTIPDQN, and PPLDACSDSGPTGVVSSMPYKKPHS.

The protein belongs to the SLX4 family. Forms a heterodimer with SLX1. Post-translationally, phosphorylated in response to DNA damage.

The protein localises to the nucleus. Regulatory subunit of the SLX1-SLX4 structure-specific endonuclease that resolves DNA secondary structures generated during DNA repair and recombination. Has endonuclease activity towards branched DNA substrates, introducing single-strand cuts in duplex DNA close to junctions with ss-DNA. The chain is Structure-specific endonuclease subunit SLX4 from Candida albicans (strain SC5314 / ATCC MYA-2876) (Yeast).